Reading from the N-terminus, the 360-residue chain is Photosystem II protein D1 (360 aa).

The next 3 helical transmembrane spans lie at 29–46, 118–133, and 142–156; these read YIGWFGVLMIPCLLTATT, HFLLGVAAYMGREWEL, and WICVAFSAPVAAATA. Histidine 118 serves as a coordination point for chlorophyll a. Pheophytin a is bound at residue tyrosine 126. [CaMn4O5] cluster contacts are provided by aspartate 170 and glutamate 189. Residues 197–218 form a helical membrane-spanning segment; sequence FHMAGVAGVFGGALFSAMHGSL. Histidine 198 provides a ligand contact to chlorophyll a. Residues histidine 215 and 264-265 contribute to the a quinone site; that span reads SF. Fe cation is bound at residue histidine 215. Fe cation is bound at residue histidine 272. The chain crosses the membrane as a helical span at residues 274–288; the sequence is FLGLWPVVGIWLTSI. 4 residues coordinate [CaMn4O5] cluster: histidine 332, glutamate 333, aspartate 342, and alanine 344. Positions 345 to 360 are excised as a propeptide; the sequence is DNSLLPVASSSPSINS.

It belongs to the reaction center PufL/M/PsbA/D family. PSII is composed of 1 copy each of membrane proteins PsbA, PsbB, PsbC, PsbD, PsbE, PsbF, PsbH, PsbI, PsbJ, PsbK, PsbL, PsbM, PsbT, PsbY, PsbZ, Psb30/Ycf12, at least 3 peripheral proteins of the oxygen-evolving complex and a large number of cofactors. It forms dimeric complexes. The D1/D2 heterodimer binds P680, chlorophylls that are the primary electron donor of PSII, and subsequent electron acceptors. It shares a non-heme iron and each subunit binds pheophytin, quinone, additional chlorophylls, carotenoids and lipids. D1 provides most of the ligands for the Mn4-Ca-O5 cluster of the oxygen-evolving complex (OEC). There is also a Cl(-1) ion associated with D1 and D2, which is required for oxygen evolution. The PSII complex binds additional chlorophylls, carotenoids and specific lipids. serves as cofactor. Post-translationally, tyr-161 forms a radical intermediate that is referred to as redox-active TyrZ, YZ or Y-Z.

Its subcellular location is the plastid. It is found in the chloroplast thylakoid membrane. The enzyme catalyses 2 a plastoquinone + 4 hnu + 2 H2O = 2 a plastoquinol + O2. Photosystem II (PSII) is a light-driven water:plastoquinone oxidoreductase that uses light energy to abstract electrons from H(2)O, generating O(2) and a proton gradient subsequently used for ATP formation. It consists of a core antenna complex that captures photons, and an electron transfer chain that converts photonic excitation into a charge separation. The D1/D2 (PsbA/PsbD) reaction center heterodimer binds P680, the primary electron donor of PSII as well as several subsequent electron acceptors. The sequence is that of Photosystem II protein D1 from Cyanidium caldarium (Red alga).